The following is a 4226-amino-acid chain: Guanylate cyclase alpha (4226 aa).

Residues 1–104 are Cytoplasmic-facing; the sequence is MSDSKKHYNE…SFIFKGLYEQ (104 aa). The helical transmembrane segment at 105–125 threads the bilayer; the sequence is FLRLPNIWFLLISLLEFIPQY. At 126–131 the chain is on the extracellular side; that stretch reads QNLSNY. A glycan (N-linked (GlcNAc...) asparagine) is linked at asparagine 127. A helical transmembrane segment spans residues 132 to 152; that stretch reads MYYSKHSSFFLLLFFICVSII. Residues 153 to 337 are Cytoplasmic-facing; sequence KNIYEDSRRS…LGYVNKELNS (185 aa). The helical transmembrane segment at 338-358 threads the bilayer; sequence YTIIGLIFTFICVFISVLFKW. Topologically, residues 359–392 are extracellular; sequence TEDDKFRNGSHFFLITVKDNICESIVKYTLLYSN. The N-linked (GlcNAc...) asparagine glycan is linked to asparagine 366. The chain crosses the membrane as a helical span at residues 393 to 413; the sequence is IIPISILISVDLISILQSILI. The Cytoplasmic portion of the chain corresponds to 414–2083; it reads ENDNHISTFE…FIYGSKHLYT (1670 aa). Disordered regions lie at residues 552–572, 832–904, 968–989, and 1740–1765; these read EHSQTLDNNNNNDNNNNNNIC, SSKN…SNND, INNNNNNNNDQKTNNLKYKSSS, and NINKNYKYDKNDKHNNNNNNNNNNSN. The segment covering 558 to 570 has biased composition (low complexity); that stretch reads DNNNNNDNNNNNN. Positions 838-847 are enriched in acidic residues; sequence TLDDPTELIS. Residues 854–873 show a composition bias toward basic and acidic residues; it reads LRDKYEHTSDKKNDTNKNRD. Residues 874 to 904 show a composition bias toward low complexity; the sequence is GANNSNNNNNKDVSNNKNKNNNNYNYNSNND. The span at 1745 to 1754 shows a compositional bias: basic and acidic residues; the sequence is YKYDKNDKHN. Low complexity predominate over residues 1755 to 1765; sequence NNNNNNNNNSN. A helical transmembrane segment spans residues 2084–2104; sequence ISIILYWNFFKNILLILPIFF. Over 2105-2119 the chain is Extracellular; the sequence is YQAYASWSCVKIYPE. A helical transmembrane segment spans residues 2120–2140; it reads LLYTFFSIFWVFIPIIYYMFL. The Cytoplasmic segment spans residues 2141-2169; sequence QHNLNYDILYNIPLFYALSRRRYNMNCFK. The helical transmembrane segment at 2170 to 2190 threads the bilayer; the sequence is FLPWIFEAIFYSMIIYFFAYA. At 2191–2202 the chain is on the extracellular side; sequence ALKENSHLNNGE. A helical membrane pass occupies residues 2203-2223; sequence VITINTFGNICFIGCLLISIL. At 2224–2235 the chain is on the cytoplasmic side; it reads RLFLEGSLWSPS. The helical transmembrane segment at 2236 to 2256 threads the bilayer; that stretch reads ILITCFGCFLFVFFPSLLFIC. Topologically, residues 2257 to 2275 are extracellular; the sequence is FAYLSNEYIREVFRQTFLW. Residues 2276–2296 form a helical membrane-spanning segment; sequence APLYVLLILWFSTCIISYIFI. At 2297–2787 the chain is on the cytoplasmic side; the sequence is NFTKSILFPN…QIHKKNKFYK (491 aa). The segment at 2477–2505 is disordered; that stretch reads NNDNNNDDNDNDNNNNNNNNDNYNNNDHN. Positions 2488 to 2502 are enriched in low complexity; it reads DNNNNNNNNDNYNNN. A helical transmembrane segment spans residues 2788–2808; the sequence is TFTPWYRFIFLLLGVFFLYVW. The Extracellular segment spans residues 2809–2828; sequence KLESSLSQLWNMPSDASTDV. The chain crosses the membrane as a helical span at residues 2829 to 2849; it reads FILFLSLLLELVLLAATVTTF. The Cytoplasmic segment spans residues 2850 to 2860; the sequence is FSNIFIENFNK. A helical membrane pass occupies residues 2861-2881; it reads IISAVVILIITYHVVSYSVTH. Topologically, residues 2882 to 2900 are extracellular; it reads IDGVFQAVLFPLYTFVILR. A helical transmembrane segment spans residues 2901 to 2921; the sequence is LPFVNAVLCNIIFLGLFIIRF. At 2922–2930 the chain is on the cytoplasmic side; the sequence is NGDHFLDKK. A helical membrane pass occupies residues 2931 to 2951; it reads GLAHYIPLFIGVDVFVGFVGY. The Extracellular portion of the chain corresponds to 2952–3008; that stretch reads RLEYNQRKNFLLEYSVESSRRKQREILNTMLPPFVVDEMIYSELNEEGIPISLKAED. A helical membrane pass occupies residues 3009–3029; that stretch reads ISTVTIIFCDIYDFQNIVASI. The Guanylate cyclase 1 domain occupies 3013–3270; sequence TIIFCDIYDF…DTVNTASRMK (258 aa). The Cytoplasmic segment spans residues 3030-3738; it reads EPTRLVEVLD…SNINSIEQAL (709 aa). Disordered regions lie at residues 3077 to 3150 and 3201 to 3230; these read EDEL…FEED and DANDDTHNVNDSFNNDKAENDNTNTDNNKP. Low complexity-rich tracts occupy residues 3083–3098 and 3108–3138; these read NKYSNNNKNNNNNYYY and NNNNNNNNNNNNNNNNNNNNLNNNNNNNNVN. The span at 3140-3150 shows a compositional bias: acidic residues; that stretch reads SDDDGDFFEED. The segment covering 3201–3220 has biased composition (basic and acidic residues); sequence DANDDTHNVNDSFNNDKAEN. Residues 3739-3759 traverse the membrane as a helical segment; the sequence is IIFLVTFVMQTLISSTVSIVF. Over 3760-3773 the chain is Extracellular; that stretch reads IDHKRATQTLHINY. Residues 3774–3794 form a helical membrane-spanning segment; it reads FAYWSVRSVYTFFGFVLWLLF. Topologically, residues 3795–3811 are cytoplasmic; the sequence is HYRTRPEVSSLLNIKWM. The helical transmembrane segment at 3812 to 3832 threads the bilayer; sequence IFFLNLLFISAACVFSIAYLW. The Extracellular segment spans residues 3833–3840; it reads AISETDQT. Residues 3841 to 3861 form a helical membrane-spanning segment; the sequence is TSYTIWMTNDTIEFFFYLVIL. Topologically, residues 3862-3871 are cytoplasmic; it reads HHNTGMLFQT. The chain crosses the membrane as a helical span at residues 3872 to 3892; sequence CILVDLLFITMSLTFIATSVV. Position 3893 (lysine 3893) is a topological domain, extracellular. A helical transmembrane segment spans residues 3894-3914; that stretch reads TITTDSTVLLIPWYVAFNLIS. Over 3915-4226 the chain is Cytoplasmic; the sequence is TYCKESIDRR…INVNDRQSNL (312 aa). Residues 3970 to 4104 form the Guanylate cyclase 2 domain; it reads TFLFADICGF…IDVLTGNLME (135 aa). Mg(2+)-binding residues include aspartate 3975, isoleucine 3976, and aspartate 4019.

This sequence in the N-terminal section; belongs to the cation transport ATPase (P-type) (TC 3.A.3) family. Type IV subfamily. In the C-terminal section; belongs to the adenylyl cyclase class-4/guanylyl cyclase family. It depends on Mg(2+) as a cofactor. Requires Mn(2+) as cofactor.

The protein resides in the cell membrane. Its subcellular location is the cytoplasmic vesicle membrane. It carries out the reaction GTP = 3',5'-cyclic GMP + diphosphate. Functionally, catalyzes the synthesis of the second messenger cGMP from GTP. In asexual blood stage schizonts, required for cGMP production which is essential for PKG activation, PKG-dependent Ca(2+) release, and ultimately merozoite egress from host erythrocytes. This chain is Guanylate cyclase alpha, found in Plasmodium falciparum (isolate 3D7).